The following is a 130-amino-acid chain: Small ribosomal subunit protein bS18 (130 aa).

Basic and acidic residues-rich tracts occupy residues 98–108 and 117–130; these read KKMEESVKSAE and EESK…AKTE. A disordered region spans residues 98 to 130; sequence KKMEESVKSAEPKATAEATEESKPKRTRKAKTE.

This sequence belongs to the bacterial ribosomal protein bS18 family. Part of the 30S ribosomal subunit. Forms a tight heterodimer with protein bS6.

Functionally, binds as a heterodimer with protein bS6 to the central domain of the 16S rRNA, where it helps stabilize the platform of the 30S subunit. This Metamycoplasma arthritidis (strain 158L3-1) (Mycoplasma arthritidis) protein is Small ribosomal subunit protein bS18.